Reading from the N-terminus, the 99-residue chain is Large ribosomal subunit protein bL21 (99 aa).

It belongs to the bacterial ribosomal protein bL21 family. Part of the 50S ribosomal subunit. Contacts protein L20.

Its function is as follows. This protein binds to 23S rRNA in the presence of protein L20. This Deinococcus geothermalis (strain DSM 11300 / CIP 105573 / AG-3a) protein is Large ribosomal subunit protein bL21.